A 126-amino-acid chain; its full sequence is Aspartate 1-decarboxylase (126 aa).

Residue S25 is the Schiff-base intermediate with substrate; via pyruvic acid of the active site. The residue at position 25 (S25) is a Pyruvic acid (Ser). T57 is a binding site for substrate. The active-site Proton donor is Y58. 73–75 (GAA) provides a ligand contact to substrate.

The protein belongs to the PanD family. As to quaternary structure, heterooctamer of four alpha and four beta subunits. Requires pyruvate as cofactor. In terms of processing, is synthesized initially as an inactive proenzyme, which is activated by self-cleavage at a specific serine bond to produce a beta-subunit with a hydroxyl group at its C-terminus and an alpha-subunit with a pyruvoyl group at its N-terminus.

The protein localises to the cytoplasm. The enzyme catalyses L-aspartate + H(+) = beta-alanine + CO2. Its pathway is cofactor biosynthesis; (R)-pantothenate biosynthesis; beta-alanine from L-aspartate: step 1/1. Its function is as follows. Catalyzes the pyruvoyl-dependent decarboxylation of aspartate to produce beta-alanine. The polypeptide is Aspartate 1-decarboxylase (Marinomonas sp. (strain MWYL1)).